Here is a 372-residue protein sequence, read N- to C-terminus: Glutamate 5-kinase (372 aa).

An ATP-binding site is contributed by Lys14. Ser54, Asp141, and Asn153 together coordinate substrate. An ATP-binding site is contributed by 173-174; it reads TD. Residues 280-358 form the PUA domain; sequence RGTLVLDAGA…EAIESILGYS (79 aa).

This sequence belongs to the glutamate 5-kinase family.

The protein resides in the cytoplasm. The catalysed reaction is L-glutamate + ATP = L-glutamyl 5-phosphate + ADP. The protein operates within amino-acid biosynthesis; L-proline biosynthesis; L-glutamate 5-semialdehyde from L-glutamate: step 1/2. Catalyzes the transfer of a phosphate group to glutamate to form L-glutamate 5-phosphate. This chain is Glutamate 5-kinase, found in Pseudomonas putida (strain ATCC 700007 / DSM 6899 / JCM 31910 / BCRC 17059 / LMG 24140 / F1).